The primary structure comprises 618 residues: Uptake hydrogenase large subunit (618 aa).

Ni(2+) is bound by residues C75, C78, C597, and C600.

This sequence belongs to the [NiFe]/[NiFeSe] hydrogenase large subunit family. As to quaternary structure, heterodimer of a large and a small subunit. Requires Ni(2+) as cofactor.

The protein localises to the cell membrane. It catalyses the reaction H2 + A = AH2. Functionally, this enzyme recycles the H(2) produced by nitrogenase to increase the production of ATP and to protect nitrogenase against inhibition or damage by O(2) under carbon- or phosphate-limited conditions. The chain is Uptake hydrogenase large subunit (hupB) from Rubrivivax gelatinosus (Rhodocyclus gelatinosus).